A 198-amino-acid polypeptide reads, in one-letter code: Proteasome subunit beta type-4 (198 aa).

An N-acetylmethionine modification is found at methionine 1. Serine 76 is modified (phosphoserine).

This sequence belongs to the peptidase T1B family. In terms of assembly, the 26S proteasome consists of a 20S proteasome core and two 19S regulatory subunits. The 20S proteasome core is composed of 28 subunits that are arranged in four stacked rings, resulting in a barrel-shaped structure. The two end rings are each formed by seven alpha subunits, and the two central rings are each formed by seven beta subunits. The catalytic chamber with the active sites is on the inside of the barrel.

The protein resides in the cytoplasm. Its subcellular location is the nucleus. Non-catalytic component of the proteasome which degrades poly-ubiquitinated proteins in the cytoplasm and in the nucleus. It is essential for the regulated turnover of proteins and for the removal of misfolded proteins. The proteasome is a multicatalytic proteinase complex that is characterized by its ability to cleave peptides with Arg, Phe, Tyr, Leu, and Glu adjacent to the leaving group at neutral or slightly basic pH. It has an ATP-dependent proteolytic activity. This subunit has a chymotrypsin-like activity. The sequence is that of Proteasome subunit beta type-4 (PRE1) from Saccharomyces cerevisiae (strain ATCC 204508 / S288c) (Baker's yeast).